A 286-amino-acid chain; its full sequence is Non-homologous end joining protein Ku (286 aa).

Residues 10-175 (TVGLVSFPVR…EEVREPDFVV (166 aa)) form the Ku domain. The segment covering 226–242 (ERQERQRREAGEVRQAD) has biased composition (basic and acidic residues). The segment at 226-270 (ERQERQRREAGEVRQADETDEAAETEVPEVDIPASRAPGETGGEL) is disordered. Residues 243 to 254 (ETDEAAETEVPE) show a composition bias toward acidic residues.

The protein belongs to the prokaryotic Ku family. In terms of assembly, homodimer. Interacts with LigD.

Functionally, with LigD forms a non-homologous end joining (NHEJ) DNA repair enzyme, which repairs dsDNA breaks with reduced fidelity. Binds linear dsDNA with 5'- and 3'- overhangs but not closed circular dsDNA nor ssDNA. Recruits and stimulates the ligase activity of LigD. This chain is Non-homologous end joining protein Ku, found in Actinosynnema mirum (strain ATCC 29888 / DSM 43827 / JCM 3225 / NBRC 14064 / NCIMB 13271 / NRRL B-12336 / IMRU 3971 / 101).